Here is a 311-residue protein sequence, read N- to C-terminus: MVSTATQIGHFSFDNCLMNAAGVYCMTKEELMEVEKSQAASFVTKTGTLEVRPGNPEPRYADTRLGSINSMGLPNNGFRYYLDFVSDLAKTGQHKPHFLSVVGLSPTETETILKAIMASDYEGLVELNLSCPNVPGKPQIAYDFETTDQLLENIFTYYTKPLGIKLPPYFDIVHFDQAAAIFNKYPLSFVNCVNSIGNGLVIEDEQVLIKPKNGFGGIGGDYIKPTALANVHAFYKRLKPSIHIIGTGGVKTGRDAFEHILCGASMVQIGTVLHQEGPAIFERVTKELKTIMVEKGYQRLADFRGNLRYKD.

Substrate-binding positions include K45, 69–73 (NSMGL), and N128. Residue 45-46 (KT) participates in FMN binding. N128 provides a ligand contact to FMN. The Nucleophile role is filled by C131. 2 residues coordinate FMN: K165 and V193. 194–195 (NS) contacts substrate. FMN contacts are provided by residues G220, 248-249 (GG), and 270-271 (GT).

This sequence belongs to the dihydroorotate dehydrogenase family. Type 1 subfamily. Homodimer. FMN is required as a cofactor.

It localises to the cytoplasm. The catalysed reaction is (S)-dihydroorotate + fumarate = orotate + succinate. It functions in the pathway pyrimidine metabolism; UMP biosynthesis via de novo pathway. Functionally, catalyzes the conversion of dihydroorotate to orotate with fumarate as the electron acceptor. The protein is Putative dihydroorotate dehydrogenase A (fumarate) (pyrD) of Streptococcus pyogenes serotype M18 (strain MGAS8232).